Reading from the N-terminus, the 382-residue chain is C-type lectin domain-containing protein 38 (382 aa).

The Cytoplasmic segment spans residues 1–40 (MAIFYDDPLERLNQPIKTKSYRKKQVVQRVHVFIFDNWKL). The helical transmembrane segment at 41–61 (ILLGILNLIFLIIAIVFAILF) threads the bilayer. Over 62 to 382 (FVGSADCAQL…FFLCKRAIDF (321 aa)) the chain is Extracellular. Residues 97 to 116 (NAITTTQGTPSNKTSTTTPS) are disordered. The span at 100–116 (TTTQGTPSNKTSTTTPS) shows a compositional bias: low complexity. Residues Asn108 and Asn189 are each glycosylated (N-linked (GlcNAc...) asparagine). 2 C-type lectin domains span residues 129-250 (VGTK…FVCE) and 264-377 (YNKN…FLCK). Intrachain disulfides connect Cys150–Cys249, Cys223–Cys241, Cys285–Cys376, and Cys348–Cys368.

In terms of tissue distribution, expressed in ventral cord motor neurons and PLM touch neurons.

It is found in the membrane. Involved in negative modulation of unc-40-mediated axon outgrowth. Required for proper presynaptic development in axons that have reached their targets. May function in concert with E3 ubiquitin-protein ligase rpm-1 in regulating axon outgrowth. The sequence is that of C-type lectin domain-containing protein 38 from Caenorhabditis elegans.